Reading from the N-terminus, the 695-residue chain is Lupanine 17-hydroxylase [cytochrome c] (695 aa).

Residues 1 to 26 form the signal peptide; the sequence is MSANKNIWIIRLGVAFVCVAIGAAQA. Residues 598–677 form the Cytochrome c domain; it reads AMAESGRHIF…ALQAFILQKA (80 aa). Residues C612, C615, and H616 each contribute to the heme c site.

Belongs to the bacterial PQQ dehydrogenase family. In terms of assembly, monomer. It depends on pyrroloquinoline quinone as a cofactor. Heme c serves as cofactor.

It localises to the periplasm. It carries out the reaction lupanine + 2 Fe(III)-[cytochrome c] + H2O = 17-hydroxylupanine + 2 Fe(II)-[cytochrome c] + 2 H(+). Functionally, catalyzes the first reaction in the catabolism of the alkaloid lupanine. It dehydrogenates lupanine, which can then be hydrated to produce 17-hydroxylupanine. In Pseudomonas sp, this protein is Lupanine 17-hydroxylase [cytochrome c] (luh).